A 292-amino-acid chain; its full sequence is Shikimate dehydrogenase (NADP(+)) (292 aa).

Shikimate is bound by residues 25–27 and threonine 72; that span reads SKS. Lysine 76 functions as the Proton acceptor in the catalytic mechanism. The shikimate site is built by asparagine 97 and aspartate 113. Residues 137–141, 161–166, and methionine 230 contribute to the NADP(+) site; these read GAGGA and NRTQSK. Tyrosine 232 is a shikimate binding site. Glycine 254 is a binding site for NADP(+).

It belongs to the shikimate dehydrogenase family. Homodimer.

The enzyme catalyses shikimate + NADP(+) = 3-dehydroshikimate + NADPH + H(+). It functions in the pathway metabolic intermediate biosynthesis; chorismate biosynthesis; chorismate from D-erythrose 4-phosphate and phosphoenolpyruvate: step 4/7. Involved in the biosynthesis of the chorismate, which leads to the biosynthesis of aromatic amino acids. Catalyzes the reversible NADPH linked reduction of 3-dehydroshikimate (DHSA) to yield shikimate (SA). In Shewanella sp. (strain MR-4), this protein is Shikimate dehydrogenase (NADP(+)).